We begin with the raw amino-acid sequence, 533 residues long: Probable protein kinase UbiB (533 aa).

Residues 24–44 (LILELPMLPWWLRLLGATLPW) traverse the membrane as a helical segment. Residues 126-494 (RFEREPLASA…WKGSRHDWLG (369 aa)) enclose the Protein kinase domain. Residues 132-140 (LASASVAQV) and Lys154 each bind ATP. Asp289 (proton acceptor) is an active-site residue. The helical transmembrane segment at 510–530 (LGQQLEAWPAWVMLAGGVFLI) threads the bilayer.

It belongs to the ABC1 family. UbiB subfamily.

The protein localises to the cell inner membrane. It participates in cofactor biosynthesis; ubiquinone biosynthesis [regulation]. Its function is as follows. Is probably a protein kinase regulator of UbiI activity which is involved in aerobic coenzyme Q (ubiquinone) biosynthesis. The chain is Probable protein kinase UbiB from Pseudomonas aeruginosa (strain LESB58).